The following is a 207-amino-acid chain: Ras-related protein Rab-2A (207 aa).

12-20 (GDTGVGKSC) provides a ligand contact to GTP. Residues 34-42 (HDLTIGVEF) carry the Effector region motif. GTP is bound by residues 60 to 64 (DTAGQ), 118 to 121 (NKSD), and 148 to 150 (SAK). Positions 187 to 207 (GAPTSKQDGTDQKPAGGGCCK) are disordered. 2 S-geranylgeranyl cysteine lipidation sites follow: C205 and C206.

It belongs to the small GTPase superfamily. Rab family.

The protein resides in the cell membrane. It carries out the reaction GTP + H2O = GDP + phosphate + H(+). With respect to regulation, regulated by guanine nucleotide exchange factors (GEFs) which promote the exchange of bound GDP for free GTP, GTPase activating proteins (GAPs) which increase the GTP hydrolysis activity, and GDP dissociation inhibitors which inhibit the dissociation of the nucleotide from the GTPase. Functionally, the small GTPases Rab are key regulators of intracellular membrane trafficking, from the formation of transport vesicles to their fusion with membranes. Rabs cycle between active GTP-bound and inactive GDP-bound states. In their active state, drive transport of vesicular carriers from donor organelles to acceptor organelles to regulate the membrane traffic that maintains organelle identity and morphology. This chain is Ras-related protein Rab-2A (rab2A), found in Dictyostelium discoideum (Social amoeba).